We begin with the raw amino-acid sequence, 1485 residues long: Putative E3 ubiquitin-protein ligase LIN-2 (1485 aa).

Acidic residues predominate over residues 337–353; that stretch reads EENEDDSDSELDNESVD. Disordered regions lie at residues 337–363, 384–450, and 462–507; these read EENE…IFSP, NQIP…ISNA, and RKND…KLSM. Residues 438 to 450 show a composition bias toward low complexity; sequence SSPDISIDNISNA. Over residues 466–484 the composition is skewed to polar residues; it reads SQTPSMNQDNENSLVLNDS. Positions 510 to 585 constitute a U-box domain; the sequence is KPPKDFVCPI…TSWKEQNPEL (76 aa). 4 WD repeats span residues 1194-1232, 1246-1283, 1409-1448, and 1454-1485; these read SCKE…KVCD, EHTK…IKCI, SLST…RVAS, and GHTK…WALD.

It catalyses the reaction S-ubiquitinyl-[E2 ubiquitin-conjugating enzyme]-L-cysteine + [acceptor protein]-L-lysine = [E2 ubiquitin-conjugating enzyme]-L-cysteine + N(6)-ubiquitinyl-[acceptor protein]-L-lysine.. Its pathway is protein modification; protein ubiquitination. In terms of biological role, putative E3 ubiquitin-protein ligase involved in the rhizobial infection process. Plays an important role in the early steps of infection thread formation and in growth and differentiation of nodules. In Lotus japonicus (Lotus corniculatus var. japonicus), this protein is Putative E3 ubiquitin-protein ligase LIN-2.